Reading from the N-terminus, the 876-residue chain is Leucine--tRNA ligase (876 aa).

A disordered region spans residues 1-20 (MATERYNPRDAEPRWQQKWN). The short motif at 43–53 (PYPSGRIHMGH) is the 'HIGH' region element. A 'KMSKS' region motif is present at residues 632–636 (KMSKS). Lys-635 lines the ATP pocket.

The protein belongs to the class-I aminoacyl-tRNA synthetase family.

The protein localises to the cytoplasm. It carries out the reaction tRNA(Leu) + L-leucine + ATP = L-leucyl-tRNA(Leu) + AMP + diphosphate. This chain is Leucine--tRNA ligase, found in Rhizobium leguminosarum bv. trifolii (strain WSM2304).